We begin with the raw amino-acid sequence, 282 residues long: Protein OS-9 homolog (282 aa).

An N-terminal signal peptide occupies residues 1-23 (MRITQILLCLVIVALSSSSHVWS). A glycan (N-linked (GlcNAc...) asparagine) is linked at Asn94. The MRH domain maps to 120 to 239 (EKCLFRQEGW…TVQCPTLCKH (120 aa)). Cys122 and Cys135 are joined by a disulfide. Trp129, Trp130, and Gln142 together coordinate a mannooligosaccharide derivative. Asn169 and Asn190 each carry an N-linked (GlcNAc...) asparagine glycan. Intrachain disulfides connect Cys194–Cys225 and Cys209–Cys237. A mannooligosaccharide derivative-binding residues include Asp195, Arg201, Glu221, and Tyr227. Residues 262–276 (DATRNKEEQAVDESP) are compositionally biased toward basic and acidic residues. A disordered region spans residues 262–282 (DATRNKEEQAVDESPKMIADS).

This sequence belongs to the OS-9 family. In terms of assembly, interacts with HRD3A.

The protein localises to the endoplasmic reticulum. Lectin which functions in endoplasmic reticulum (ER) quality control and ER-associated degradation (ERAD). May bind terminally misfolded non-glycosylated proteins as well as improperly folded glycoproteins, retain them in the ER, and possibly transfer them to the ubiquitination machinery and promote their degradation. Targets the misfolded LRR receptor kinase BRI1 and the misfolded receptor-like kinase EFR. The protein is Protein OS-9 homolog of Arabidopsis thaliana (Mouse-ear cress).